A 150-amino-acid polypeptide reads, in one-letter code: C-type lectin mosGCTL-7 (150 aa).

The first 17 residues, 1–17 (MQLVHVLVVLLSVVAHA), serve as a signal peptide directing secretion. One can recognise a C-type lectin domain in the interval 18–140 (KKFFIPNLKA…CRGFKAYIVC (123 aa)). N-linked (GlcNAc...) asparagine glycosylation is present at N67. C111 and C131 are oxidised to a cystine.

As to quaternary structure, interacts with putative receptor-type tyrosine-protein phosphatase mosPTP-1; the interaction probably mediates the recruitment of Japanese encephalitis virus particles in complex with C-type lectin mosGCTL-7 to the cell surface. In terms of assembly, (Microbial infection) Interacts with envelope protein E (glycosylated) of Japanese encephalitis virus in a calcium-dependent manner.

It localises to the secreted. Functionally, carbohydrate-binding protein. In terms of biological role, (Microbial infection) Facilitates Japanese encephalitis virus infection in mosquitoes probably via capturing viral particles and presenting them to a ligand on the cell surface, thereby facilitating viral entry. The chain is C-type lectin mosGCTL-7 from Aedes aegypti (Yellowfever mosquito).